The sequence spans 740 residues: Arf-GAP with coiled-coil, ANK repeat and PH domain-containing protein 1 (740 aa).

Residues 1–226 (MTVKLDFEEC…RKELGTQLHN (226 aa)) form the BAR domain. A required for formation of endosomal tubules when overexpressed with PIP5K1C region spans residues 1–382 (MTVKLDFEEC…RGPGQVSGYH (382 aa)). The PH domain maps to 265–360 (GLVMEGHLFK…WVSAVQSSIA (96 aa)). Residues 405-527 (GQVAAQVQSV…KFLTKLPEIR (123 aa)) form the Arf-GAP domain. Residues 405–740 (GQVAAQVQSV…SRRSHDLHTL (336 aa)) form a required for interaction with GULP1 region. The segment at 420-443 (CCDCREPAPEWASINLGVTLCIQC) adopts a C4-type zinc-finger fold. Residue Tyr485 is modified to 3'-nitrotyrosine. The segment at 525–562 (EIRGRRGGRGPPRGHPPVPPKPPIRPHSGIVRSKSECP) is disordered. The prevents interaction with ITGB1 when S-554 is not phosphorylated stretch occupies residues 525–566 (EIRGRRGGRGPPRGHPPVPPKPPIRPHSGIVRSKSECPSDDM). The segment covering 537–549 (RGHPPVPPKPPIR) has biased composition (pro residues). 3 ANK repeats span residues 606-635 (GNAT…NVNQ), 639-668 (AGRG…DLGA), and 672-702 (EGRD…EAEA).

Banana-shaped homodimer laterally assembling into tetramers, the tetramers further pack helically onto the membrane. Interacts with GTP-bound ARF6. Interacts with third cytoplasmic loop of SLC2A4/GLUT4. Interacts with CLTC. Interacts with GULP1. Forms a complex with GDP-bound ARF6 and GULP1. Interacts with ITGB1; required for ITGB1 recycling.

The protein localises to the recycling endosome membrane. GAP activity stimulated by phosphatidylinositol 4,5-bisphosphate (PIP2) and phosphatidic acid. Functionally, GTPase-activating protein (GAP) for ADP ribosylation factor 6 (ARF6) required for clathrin-dependent export of proteins from recycling endosomes to trans-Golgi network and cell surface. Required for regulated export of ITGB1 from recycling endosomes to the cell surface and ITGB1-dependent cell migration. The polypeptide is Arf-GAP with coiled-coil, ANK repeat and PH domain-containing protein 1 (Acap1) (Mus musculus (Mouse)).